Consider the following 87-residue polypeptide: Large ribosomal subunit protein bL28 (87 aa).

This sequence belongs to the bacterial ribosomal protein bL28 family.

This Methylacidiphilum infernorum (isolate V4) (Methylokorus infernorum (strain V4)) protein is Large ribosomal subunit protein bL28.